The chain runs to 478 residues: ATP synthase subunit beta (478 aa).

164–171 (GGAGVGKT) is a binding site for ATP.

The protein belongs to the ATPase alpha/beta chains family. F-type ATPases have 2 components, CF(1) - the catalytic core - and CF(0) - the membrane proton channel. CF(1) has five subunits: alpha(3), beta(3), gamma(1), delta(1), epsilon(1). CF(0) has three main subunits: a(1), b(2) and c(9-12). The alpha and beta chains form an alternating ring which encloses part of the gamma chain. CF(1) is attached to CF(0) by a central stalk formed by the gamma and epsilon chains, while a peripheral stalk is formed by the delta and b chains.

The protein resides in the cell membrane. It carries out the reaction ATP + H2O + 4 H(+)(in) = ADP + phosphate + 5 H(+)(out). In terms of biological role, produces ATP from ADP in the presence of a proton gradient across the membrane. The catalytic sites are hosted primarily by the beta subunits. This Streptomyces coelicolor (strain ATCC BAA-471 / A3(2) / M145) protein is ATP synthase subunit beta.